The primary structure comprises 482 residues: Pyruvate kinase (482 aa).

Arg37 lines the substrate pocket. Asn39, Ser41, and Asp71 together coordinate K(+). An ATP-binding site is contributed by 39–42 (NFSH). Positions 78 and 160 each coordinate ATP. Residue Glu222 coordinates Mg(2+). Residues Gly245, Asp246, and Thr278 each coordinate substrate. Residue Asp246 participates in Mg(2+) binding.

Belongs to the pyruvate kinase family. Homotetramer. Mg(2+) serves as cofactor. The cofactor is K(+).

It carries out the reaction pyruvate + ATP = phosphoenolpyruvate + ADP + H(+). It functions in the pathway carbohydrate degradation; glycolysis; pyruvate from D-glyceraldehyde 3-phosphate: step 5/5. This Agrobacterium vitis (Rhizobium vitis) protein is Pyruvate kinase (ttuE).